The sequence spans 261 residues: Probable septum site-determining protein MinC (261 aa).

The segment at 106–145 (RAPAAKPADEAEPAAVPAVETAAAPAAAAAPEQPSEPAPT) is disordered. Residues 118 to 144 (PAAVPAVETAAAPAAAAAPEQPSEPAP) show a composition bias toward low complexity.

This sequence belongs to the MinC family. Interacts with MinD and FtsZ.

Functionally, cell division inhibitor that blocks the formation of polar Z ring septums. Rapidly oscillates between the poles of the cell to destabilize FtsZ filaments that have formed before they mature into polar Z rings. Prevents FtsZ polymerization. The polypeptide is Probable septum site-determining protein MinC (Burkholderia orbicola (strain AU 1054)).